Consider the following 158-residue polypeptide: Large ribosomal subunit protein mL50 (158 aa).

This sequence belongs to the mitochondrion-specific ribosomal protein mL50 family. As to quaternary structure, component of the mitochondrial large ribosomal subunit (mt-LSU). Mature mammalian 55S mitochondrial ribosomes consist of a small (28S) and a large (39S) subunit. The 28S small subunit contains a 12S ribosomal RNA (12S mt-rRNA) and 30 different proteins. The 39S large subunit contains a 16S rRNA (16S mt-rRNA), a copy of mitochondrial valine transfer RNA (mt-tRNA(Val)), which plays an integral structural role, and 52 different proteins.

Its subcellular location is the mitochondrion. In Homo sapiens (Human), this protein is Large ribosomal subunit protein mL50 (MRPL50).